The following is a 34-amino-acid chain: Beta/mu-theraphotoxin-Pe1b (34 aa).

Disulfide bonds link cysteine 2–cysteine 16, cysteine 9–cysteine 21, and cysteine 15–cysteine 28.

The protein belongs to the neurotoxin 10 (Hwtx-1) family. 54 (ProTx-1) subfamily. Expressed by the venom gland.

It is found in the secreted. Its function is as follows. Ion channel impairing toxin that inhibits several voltage-gated sodium channels. It acts by inhibiting the inward component of the sodium current and by shifting the voltage dependence of channel activation to more depolarized potentials. Its most potent activity is on Nav1.7/SCN9A (IC(50)=167 nM), followed by Nav1.6/SCN8A (IC(50)=696 nM), and Nav1.2/SCN2A (IC(50)=3.54 uM). This is Beta/mu-theraphotoxin-Pe1b from Phormingochilus everetti (Malaysian purple earth tiger tarantula).